The primary structure comprises 348 residues: MTQKNFVELRNVTKRFGSNTVIDNINLTIPQGQMVTLLGPSGCGKTTILRLVAGLEKPSEGQIFIDGEDVTHRSIQQRDICMVFQSYALFPHMSLGENVGYGLKMLGVPRAELKARVKEALAMVDLEGFEDRFVDQISGGQQQRVALARALILKPKVLLFDEPLSNLDANLRRSMRDKIRELQKQFDITSLYVTHDQSEAFAVSDTVLVMNKGHIMQIGSPQDLYRQPASRFMASFMGDANLFPATFSDGYVDIYGYHLPRPLHFGTQGEGMVGVRPEAITLSDRGEESQRCVIRHVAYMGPQYEVTVEWHGQEILLQVNATRLQPDVGEQYYLEIHPYGMFVLADAA.

Residues 7 to 237 form the ABC transporter domain; sequence VELRNVTKRF…PASRFMASFM (231 aa). ATP is bound at residue 39-46; sequence GPSGCGKT.

This sequence belongs to the ABC transporter superfamily. Fe(3+) ion importer (TC 3.A.1.10) family. The complex is composed of two ATP-binding proteins (FbpC), two transmembrane proteins (FbpB) and a solute-binding protein (FbpA).

It is found in the cell inner membrane. It carries out the reaction Fe(3+)(out) + ATP + H2O = Fe(3+)(in) + ADP + phosphate + H(+). Part of the ABC transporter complex FbpABC involved in Fe(3+) ions import. Responsible for energy coupling to the transport system. The polypeptide is Fe(3+) ions import ATP-binding protein FbpC (Escherichia coli (strain K12)).